Consider the following 207-residue polypeptide: Uracil phosphoribosyltransferase (207 aa).

5-phospho-alpha-D-ribose 1-diphosphate contacts are provided by residues R77, R102, and 129–137; that span reads DPMLATGGS. Residues I192 and 197-199 each bind uracil; that span reads GDA. Residue D198 coordinates 5-phospho-alpha-D-ribose 1-diphosphate.

This sequence belongs to the UPRTase family. Requires Mg(2+) as cofactor.

It carries out the reaction UMP + diphosphate = 5-phospho-alpha-D-ribose 1-diphosphate + uracil. It participates in pyrimidine metabolism; UMP biosynthesis via salvage pathway; UMP from uracil: step 1/1. With respect to regulation, allosterically activated by GTP. In terms of biological role, catalyzes the conversion of uracil and 5-phospho-alpha-D-ribose 1-diphosphate (PRPP) to UMP and diphosphate. This is Uracil phosphoribosyltransferase from Dictyoglomus thermophilum (strain ATCC 35947 / DSM 3960 / H-6-12).